Reading from the N-terminus, the 288-residue chain is THO complex subunit 4D (288 aa).

A disordered region spans residues M1–P55. S2 carries the N-acetylserine modification. Residues T93–G170 form the RRM domain. Residues Q201–S288 are disordered. Residues Q232–G260 show a composition bias toward gly residues. A compositionally biased stretch (basic and acidic residues) spans K264 to H281.

Belongs to the ALYREF family. In terms of assembly, interacts with PARP1. Interacts with EIF4A3.

Its subcellular location is the nucleus. It localises to the nucleoplasm. The protein localises to the nucleolus. In terms of biological role, export adapter involved in nuclear export of spliced and unspliced mRNA. Plays a role in disease resistance. Mediates multiple defense responses triggered by NEP1, including stomatal closure, hypersensitive cell death (HCD) and defense-related gene expression. In Arabidopsis thaliana (Mouse-ear cress), this protein is THO complex subunit 4D.